The sequence spans 220 residues: Deoxyribose-phosphate aldolase (220 aa).

Asp89 serves as the catalytic Proton donor/acceptor. Lys151 serves as the catalytic Schiff-base intermediate with acetaldehyde. The Proton donor/acceptor role is filled by Lys180.

The protein belongs to the DeoC/FbaB aldolase family. DeoC type 1 subfamily.

It localises to the cytoplasm. It carries out the reaction 2-deoxy-D-ribose 5-phosphate = D-glyceraldehyde 3-phosphate + acetaldehyde. The protein operates within carbohydrate degradation; 2-deoxy-D-ribose 1-phosphate degradation; D-glyceraldehyde 3-phosphate and acetaldehyde from 2-deoxy-alpha-D-ribose 1-phosphate: step 2/2. Functionally, catalyzes a reversible aldol reaction between acetaldehyde and D-glyceraldehyde 3-phosphate to generate 2-deoxy-D-ribose 5-phosphate. This chain is Deoxyribose-phosphate aldolase, found in Streptococcus pneumoniae (strain CGSP14).